Reading from the N-terminus, the 727-residue chain is Fatty acid oxidation complex subunit alpha (727 aa).

Positions 1 to 200 (MNDQQPFSAI…RQGLVDEAVP (200 aa)) are enoyl-CoA hydratase. A 3-hydroxyacyl-CoA dehydrogenase region spans residues 316–727 (KPIHYVGILG…PPTDEDDSAS (412 aa)).

In the N-terminal section; belongs to the enoyl-CoA hydratase/isomerase family. This sequence in the central section; belongs to the 3-hydroxyacyl-CoA dehydrogenase family. As to quaternary structure, heterotetramer of two alpha chains (FadJ) and two beta chains (FadI).

It localises to the cytoplasm. It carries out the reaction a (3S)-3-hydroxyacyl-CoA = a (2E)-enoyl-CoA + H2O. It catalyses the reaction a 4-saturated-(3S)-3-hydroxyacyl-CoA = a (3E)-enoyl-CoA + H2O. The enzyme catalyses a (3S)-3-hydroxyacyl-CoA + NAD(+) = a 3-oxoacyl-CoA + NADH + H(+). The catalysed reaction is (3S)-3-hydroxybutanoyl-CoA = (3R)-3-hydroxybutanoyl-CoA. The protein operates within lipid metabolism; fatty acid beta-oxidation. Functionally, catalyzes the formation of a hydroxyacyl-CoA by addition of water on enoyl-CoA. Also exhibits 3-hydroxyacyl-CoA epimerase and 3-hydroxyacyl-CoA dehydrogenase activities. The protein is Fatty acid oxidation complex subunit alpha of Pectobacterium carotovorum subsp. carotovorum (strain PC1).